The following is a 222-amino-acid chain: Elongation factor 1-beta' (222 aa).

Residues 71 to 113 (SQGTSPLTAGAKPTAPAPAAKDDDDDDVDLFGSGDEEEDAEAE) are disordered. Low complexity predominate over residues 78 to 89 (TAGAKPTAPAPA). A compositionally biased stretch (acidic residues) spans 92–111 (DDDDDDVDLFGSGDEEEDAE).

The protein belongs to the EF-1-beta/EF-1-delta family. In terms of assembly, EF-1 is composed of 4 subunits: alpha, beta, beta' and gamma. In terms of processing, phosphorylated.

In terms of biological role, EF-1-beta and EF-1-beta' stimulate the exchange of GDP bound to EF-1-alpha to GTP. This is Elongation factor 1-beta' from Bombyx mori (Silk moth).